Here is a 257-residue protein sequence, read N- to C-terminus: NAD-capped RNA hydrolase NudC (257 aa).

The substrate site is built by Lys25 and Arg69. Residues Cys98 and Cys101 each contribute to the Zn(2+) site. Glu111 contributes to the substrate binding site. Residues Cys116 and Cys119 each coordinate Zn(2+). Tyr124 contacts substrate. The 124-residue stretch at 125-248 (PQIAPCIIVA…TVARRLIEDT (124 aa)) folds into the Nudix hydrolase domain. Residues Ala158, Glu174, and Glu178 each contribute to the a divalent metal cation site. Positions 159–180 (GFVEVGETLEQAVAREVMEESG) match the Nudix box motif. 192–199 (QPWPFPQS) contributes to the substrate binding site. Glu219 is a binding site for a divalent metal cation. A substrate-binding site is contributed by Ala241.

Belongs to the Nudix hydrolase family. NudC subfamily. Homodimer. Requires Mg(2+) as cofactor. It depends on Mn(2+) as a cofactor. The cofactor is Zn(2+).

The enzyme catalyses a 5'-end NAD(+)-phospho-ribonucleoside in mRNA + H2O = a 5'-end phospho-adenosine-phospho-ribonucleoside in mRNA + beta-nicotinamide D-ribonucleotide + 2 H(+). It catalyses the reaction NAD(+) + H2O = beta-nicotinamide D-ribonucleotide + AMP + 2 H(+). It carries out the reaction NADH + H2O = reduced beta-nicotinamide D-ribonucleotide + AMP + 2 H(+). MRNA decapping enzyme that specifically removes the nicotinamide adenine dinucleotide (NAD) cap from a subset of mRNAs by hydrolyzing the diphosphate linkage to produce nicotinamide mononucleotide (NMN) and 5' monophosphate mRNA. The NAD-cap is present at the 5'-end of some mRNAs and stabilizes RNA against 5'-processing. Has preference for mRNAs with a 5'-end purine. Catalyzes the hydrolysis of a broad range of dinucleotide pyrophosphates. The protein is NAD-capped RNA hydrolase NudC of Shigella flexneri serotype 5b (strain 8401).